The sequence spans 398 residues: tRNA(Ile)-lysidine synthase (398 aa).

25–30 (SGGVDS) serves as a coordination point for ATP.

This sequence belongs to the tRNA(Ile)-lysidine synthase family.

It is found in the cytoplasm. It catalyses the reaction cytidine(34) in tRNA(Ile2) + L-lysine + ATP = lysidine(34) in tRNA(Ile2) + AMP + diphosphate + H(+). Its function is as follows. Ligates lysine onto the cytidine present at position 34 of the AUA codon-specific tRNA(Ile) that contains the anticodon CAU, in an ATP-dependent manner. Cytidine is converted to lysidine, thus changing the amino acid specificity of the tRNA from methionine to isoleucine. The chain is tRNA(Ile)-lysidine synthase from Francisella tularensis subsp. holarctica (strain OSU18).